The following is a 294-amino-acid chain: Beta-glucoside kinase (294 aa).

Residue 5–11 coordinates ATP; it reads AFDIGGT.

The protein belongs to the ROK (NagC/XylR) family.

It catalyses the reaction D-cellobiose + ATP = 6-phospho-beta-D-glucosyl-(1-&gt;4)-D-glucose + ADP + H(+). In terms of biological role, catalyzes the ATP-dependent phosphorylation of cellobiose to produce cellobiose-6'-P. May have a dual role of kinase and transcriptional regulator of the cellobiose-PTS operon. The protein is Beta-glucoside kinase (bglK) of Listeria monocytogenes serovar 1/2a (strain ATCC BAA-679 / EGD-e).